A 26-amino-acid chain; its full sequence is Neprilysin (26 aa).

This sequence belongs to the peptidase M13 family. The cofactor is Zn(2+).

Its subcellular location is the cell membrane. The catalysed reaction is Preferential cleavage of polypeptides between hydrophobic residues, particularly with Phe or Tyr at P1'.. It carries out the reaction substance P + H2O = substance P(1-9) + L-Leu-L-Met-NH2. It catalyses the reaction substance P + H2O = substance P(1-7) + L-Phe-Gly-L-Leu-L-Met-NH2. The enzyme catalyses neurotensin + H2O = neurotensin(1-11) + L-isoleucyl-L-leucine. The catalysed reaction is neurotensin + H2O = neurotensin(1-10) + L-tyrosyl-L-isoleucyl-L-leucine. Thermolysin-like specificity, but is almost confined on acting on polypeptides of up to 30 amino acids. Biologically important in the destruction of opioid peptides such as Met- and Leu-enkephalins by cleavage of a Gly-Phe bond. Catalyzes cleavage of bradykinin, substance P and neurotensin peptides. Able to cleave angiotensin-1, angiotensin-2 and angiotensin 1-9. Involved in the degradation of atrial natriuretic factor (ANF) and brain natriuretic factor (BNP(1-32)). Displays UV-inducible elastase activity toward skin preelastic and elastic fibers. This Sus scrofa (Pig) protein is Neprilysin (MME).